We begin with the raw amino-acid sequence, 69 residues long: uncharacterized protein (69 aa).

As to quaternary structure, interacts with the RNA polymerase core.

This is an uncharacterized protein from Bacillus subtilis (strain 168).